A 247-amino-acid chain; its full sequence is MADVSMRQMLEAGVHFGHQTRFWDPKMRPYIFGERNKIHIINLEKTLPLYKDALNFAGRLASNGGKILFVGTKRPARELVREHAARCGMPYVDHRWLGGMMTNFRTVKHSIARLKDLETQAEDGTFDKVTKREALALSREREKLDRSLSGIKNMERLPDAMFVVDVGYEHIAISEAKKLGIPVIGVVDTNCSPREVDYVIPGNDDAIRAIELYVSGIADAVIEAKQASSHAAAAGKDDFVEINDTAS.

The protein belongs to the universal ribosomal protein uS2 family.

The protein is Small ribosomal subunit protein uS2 of Halorhodospira halophila (strain DSM 244 / SL1) (Ectothiorhodospira halophila (strain DSM 244 / SL1)).